The primary structure comprises 355 residues: MKLEVNLKQNPYDIIIEKGALKGVGQWVKSLWEPQKIALITDNHVRGLYAEKVKLSLENEGFEVVVFDFLEGEASKNLKTVNKAYEFLIKNGMTRSDGIVALGGGVVGDLAGFVASTYMRGIHFVQVPTSLTAQVDSSIGGKTGVNTPFAKNIVGTFAQPDGVLIDPNVLKTLGKRELIEGMGEVVKYGLIDDPELWQLLDNIDGSVHSILENSETIIYRSCNVKRKIVVEDEFEGGVRMYLNFGHTIGHAVEQTAGYGKVMHGEAVAIGMVQISRVAEKKKLMPQGITRQIAEMCVKFGLPVDYEPWRVEELYTALTHDKKARGNSIKTVIVPEIGKAAINQIPLIEMKEYLEK.

Residues 71–76 (EGEASK), 105–109 (GVVGD), 129–130 (TS), Lys-142, and Lys-151 contribute to the NAD(+) site. Positions 184, 246, and 263 each coordinate Zn(2+).

This sequence belongs to the sugar phosphate cyclases superfamily. Dehydroquinate synthase family. Requires Co(2+) as cofactor. Zn(2+) is required as a cofactor. NAD(+) serves as cofactor.

Its subcellular location is the cytoplasm. It catalyses the reaction 7-phospho-2-dehydro-3-deoxy-D-arabino-heptonate = 3-dehydroquinate + phosphate. It participates in metabolic intermediate biosynthesis; chorismate biosynthesis; chorismate from D-erythrose 4-phosphate and phosphoenolpyruvate: step 2/7. Catalyzes the conversion of 3-deoxy-D-arabino-heptulosonate 7-phosphate (DAHP) to dehydroquinate (DHQ). In Streptococcus thermophilus (strain CNRZ 1066), this protein is 3-dehydroquinate synthase.